Reading from the N-terminus, the 212-residue chain is Cytidylate kinase (212 aa).

An ATP-binding site is contributed by 7-15; the sequence is GPAASGKGT.

Belongs to the cytidylate kinase family. Type 1 subfamily.

The protein resides in the cytoplasm. The catalysed reaction is CMP + ATP = CDP + ADP. It carries out the reaction dCMP + ATP = dCDP + ADP. The protein is Cytidylate kinase of Rhodopseudomonas palustris (strain TIE-1).